The chain runs to 869 residues: Leucine--tRNA ligase (869 aa).

The 'HIGH' region signature appears at 51–61 (PYPSGRIHMGH). A 'KMSKS' region motif is present at residues 636–640 (KMSKS). Position 639 (Lys639) interacts with ATP.

It belongs to the class-I aminoacyl-tRNA synthetase family.

The protein resides in the cytoplasm. The enzyme catalyses tRNA(Leu) + L-leucine + ATP = L-leucyl-tRNA(Leu) + AMP + diphosphate. This is Leucine--tRNA ligase from Dinoroseobacter shibae (strain DSM 16493 / NCIMB 14021 / DFL 12).